A 368-amino-acid chain; its full sequence is uncharacterized protein (368 aa).

The first 19 residues, 1-19 (MHVSMIIFVSIFSIKYIMA), serve as a signal peptide directing secretion. Asparagine 99, asparagine 170, asparagine 266, and asparagine 295 each carry an N-linked (GlcNAc...) asparagine; by host glycan.

This is an uncharacterized protein from Ostreid herpesvirus 1 (isolate France) (OsHV-1).